A 460-amino-acid chain; its full sequence is G2/mitotic-specific cyclin-4 (460 aa).

The protein belongs to the cyclin family. Cyclin AB subfamily.

In terms of biological role, essential for the control of the cell cycle at the G2/M (mitosis) transition. Interacts with the CDC2 protein kinase to form MPF. G2/M cyclins accumulate steadily during G2 and are abruptly destroyed at mitosis. The chain is G2/mitotic-specific cyclin-4 (CLB4) from Saccharomyces cerevisiae (strain ATCC 204508 / S288c) (Baker's yeast).